A 392-amino-acid chain; its full sequence is MKSLRELELAGKRVLVRVDFNVPMDDKQRITDDIRIRMVLPTLRYVLEQGGRLIICSHMGRPKGKRVEEYSLAPIARHLAGLLGRDVGIAPDCIGAEVEAQVAALGVGEVLLLQNLRFYGEETENDAVFAGKLAGLADVYVNDAFAVSHRAHASVVGVAERVAEKCAGFLLQTEIDYFHKSMNDPIRPLVALVGGAKVSSKIGALENMLGKVDKMIIGGAMANTFLMSQGVDVGASKVEDDLLVTARNFLQAAGERGMKVYLPVDFVVADRFAADAVHKTVPADSVPEGWMALDVGPASSILFREALQGAGTIVWNGPMGAFEMDAFAGGTMSLCRDVAASQALSITGGGDSNAAVKKSGEADNISYMSTGGGAFLQLMEGKTLPGVDALEA.

Substrate is bound by residues 19-21 (DFN), R35, 58-61 (HMGR), R117, and R150. ATP contacts are provided by residues K201, E323, and 349-352 (GGDS).

The protein belongs to the phosphoglycerate kinase family. In terms of assembly, monomer.

The protein localises to the cytoplasm. The catalysed reaction is (2R)-3-phosphoglycerate + ATP = (2R)-3-phospho-glyceroyl phosphate + ADP. Its pathway is carbohydrate degradation; glycolysis; pyruvate from D-glyceraldehyde 3-phosphate: step 2/5. This Desulfotalea psychrophila (strain LSv54 / DSM 12343) protein is Phosphoglycerate kinase.